The following is a 342-amino-acid chain: Nucleoid-associated protein Shewana3_2426 (342 aa).

The protein belongs to the YejK family.

The protein resides in the cytoplasm. The protein localises to the nucleoid. This Shewanella sp. (strain ANA-3) protein is Nucleoid-associated protein Shewana3_2426.